A 459-amino-acid chain; its full sequence is Ribulose bisphosphate carboxylase (459 aa).

A substrate-binding site is contributed by N111. The Proton acceptor role is filled by K166. K168 provides a ligand contact to substrate. 3 residues coordinate Mg(2+): K191, D193, and E194. The residue at position 191 (K191) is an N6-carboxylysine. The active-site Proton acceptor is H287. Substrate-binding residues include R288, H321, and S368.

It belongs to the RuBisCO large chain family. Type II subfamily. In terms of assembly, homodimer. Mg(2+) is required as a cofactor.

It catalyses the reaction 2 (2R)-3-phosphoglycerate + 2 H(+) = D-ribulose 1,5-bisphosphate + CO2 + H2O. The enzyme catalyses D-ribulose 1,5-bisphosphate + O2 = 2-phosphoglycolate + (2R)-3-phosphoglycerate + 2 H(+). Its function is as follows. RuBisCO catalyzes two reactions: the carboxylation of D-ribulose 1,5-bisphosphate, the primary event in carbon dioxide fixation, as well as the oxidative fragmentation of the pentose substrate. Both reactions occur simultaneously and in competition at the same active site. The polypeptide is Ribulose bisphosphate carboxylase (Albidiferax ferrireducens (strain ATCC BAA-621 / DSM 15236 / T118) (Rhodoferax ferrireducens)).